A 122-amino-acid polypeptide reads, in one-letter code: UPF0102 protein VV1_0590 (122 aa).

The protein belongs to the UPF0102 family.

This is UPF0102 protein VV1_0590 from Vibrio vulnificus (strain CMCP6).